We begin with the raw amino-acid sequence, 471 residues long: Tyrosine--tRNA ligase, mitochondrial (471 aa).

Tyr-71 is an L-tyrosine binding site. Asp-75 contributes to the ATP binding site. Residues 76-85 carry the 'HIGH' region motif; that stretch reads PTGDSLHVGH. The L-tyrosine site is built by Asp-115, Tyr-215, Gln-219, Asp-222, and Gln-241. ATP-binding residues include Ile-268 and Lys-278. The short motif at 275 to 279 is the 'KMSKS' region element; that stretch reads KLGKS. N6-acetyllysine occurs at positions 349 and 361.

Belongs to the class-I aminoacyl-tRNA synthetase family. Homodimer.

The protein localises to the mitochondrion matrix. The enzyme catalyses tRNA(Tyr) + L-tyrosine + ATP = L-tyrosyl-tRNA(Tyr) + AMP + diphosphate + H(+). Functionally, catalyzes the attachment of tyrosine to tRNA(Tyr) in a two-step reaction: tyrosine is first activated by ATP to form Tyr-AMP and then transferred to the acceptor end of tRNA(Tyr). In Rattus norvegicus (Rat), this protein is Tyrosine--tRNA ligase, mitochondrial (Yars2).